The following is a 444-amino-acid chain: ATPase PAAT (444 aa).

S177, S182, and S254 each carry phosphoserine. The segment at 279–300 (SAQPSGEGNTTNHDEGHLMPQN) is disordered. The span at 280–289 (AQPSGEGNTT) shows a compositional bias: polar residues. S302 carries the phosphoserine modification. The disordered stretch occupies residues 424–444 (PPPGMPLRHYDSRERLSNGER). Basic and acidic residues predominate over residues 431-444 (RHYDSRERLSNGER).

Homodimer. Interacts with ABCB7, ABCB8/MITOSUR and ABCB10.

The protein localises to the cytoplasm. The protein resides in the mitochondrion. It carries out the reaction ATP + H2O = ADP + phosphate + H(+). Functionally, ATPase that regulates mitochondrial ABC transporters ABCB7, ABCB8/MITOSUR and ABCB10. Regulates mitochondrial ferric concentration and heme biosynthesis and plays a role in the maintenance of mitochondrial homeostasis and cell survival. The protein is ATPase PAAT of Mus musculus (Mouse).